Reading from the N-terminus, the 2071-residue chain is GTPase-activating protein BEM2 (2071 aa).

Disordered regions lie at residues 1–115 (MPLK…QAHK) and 171–195 (AAPAREGRYSHQPTASLSSIGSERP). Composition is skewed to low complexity over residues 16–31 (PQSCASKPSSASQSSC) and 42–55 (SSISSNSSPNSKNN). A compositionally biased stretch (polar residues) spans 62 to 80 (SNGSVYSDETTLKTAQTHY). Positions 81-110 (TQQGQQAKPQQHTQQQQQQPQTPMQLQVPT) are enriched in low complexity. Residues 181–191 (HQPTASLSSIG) are compositionally biased toward polar residues. The Ras-GEF domain occupies 471–738 (DTEKVANQIH…MEMSLKMEPP (268 aa)). A compositionally biased stretch (polar residues) spans 787 to 811 (PSTKNNNSSQASNRISQLSVNSTPH). Disordered regions lie at residues 787–819 (PSTKNNNSSQASNRISQLSVNSTPHSNASSSSA), 1645–1676 (RSVLIQHPNKVSVSSASSSVSGSSSGSTARTS), and 1702–1738 (SVSSRSSVISNTATATSPASGASPNQTSTSHHGGMGK). Composition is skewed to low complexity over residues 1656–1676 (SVSSASSSVSGSSSGSTARTS) and 1702–1726 (SVSSRSSVISNTATATSPASGASPN). The 103-residue stretch at 1751–1853 (SGFTSSSSQY…WMKAITLSKR (103 aa)) folds into the PH domain. The 199-residue stretch at 1872–2070 (VPVEDVCERE…HLIRNPEHYF (199 aa)) folds into the Rho-GAP domain.

Functionally, GTPase-activating protein (GAP) for RHO proteins. Required for polarized growth and maintenance of cell polarity. This Eremothecium gossypii (strain ATCC 10895 / CBS 109.51 / FGSC 9923 / NRRL Y-1056) (Yeast) protein is GTPase-activating protein BEM2 (BEM2).